The primary structure comprises 410 residues: MSSAVVVSSENLDGQQQSSSTPASPAAEKVNLLGMSRAELEKFFEDIGEKKFRAGQVMKWIHQYFVTDFAEMTNISGKLRAKLEQICEIKAPEVVHRHYSKDGTRKWVFRVGEGSGSLVETVLIPAEDKTGSRKTLCISSQVGCALDCSFCSTGKQGFQRDLTPDEIIGQLWMANYSYMEEVPVAERERSVTNVVMMGMGEPLLNYDAVLSSMHIMLDDFAYGMSKRRVTLSTSGVVPKIDQLAKDIDVALAISLHAPNDELRNELVPINKKYPLAQLIAACQRYIAKDGNESARKHVTIEYVMLEGVNDQPEHAQQLLKLLKNLPSKINLIPFNPFPHAPYGRSSRNRIISFQKTLSDAGFVCTIRQTRGDDIDAACGQLVGQVADRTRRAEQWQKKVAQRQEILRTQG.

The interval 7–26 (VSSENLDGQQQSSSTPASPA) is disordered. Low complexity predominate over residues 15 to 26 (QQQSSSTPASPA). Catalysis depends on Glu120, which acts as the Proton acceptor. A Radical SAM core domain is found at 130–373 (TGSRKTLCIS…CTIRQTRGDD (244 aa)). The cysteines at positions 137 and 378 are disulfide-linked. Positions 144, 148, and 151 each coordinate [4Fe-4S] cluster. Residues 200–201 (GE), Ser232, 254–256 (SLH), and Asn335 each bind S-adenosyl-L-methionine. Cys378 acts as the S-methylcysteine intermediate in catalysis.

The protein belongs to the radical SAM superfamily. RlmN family. Requires [4Fe-4S] cluster as cofactor.

It is found in the cytoplasm. It catalyses the reaction adenosine(2503) in 23S rRNA + 2 reduced [2Fe-2S]-[ferredoxin] + 2 S-adenosyl-L-methionine = 2-methyladenosine(2503) in 23S rRNA + 5'-deoxyadenosine + L-methionine + 2 oxidized [2Fe-2S]-[ferredoxin] + S-adenosyl-L-homocysteine. It carries out the reaction adenosine(37) in tRNA + 2 reduced [2Fe-2S]-[ferredoxin] + 2 S-adenosyl-L-methionine = 2-methyladenosine(37) in tRNA + 5'-deoxyadenosine + L-methionine + 2 oxidized [2Fe-2S]-[ferredoxin] + S-adenosyl-L-homocysteine. In terms of biological role, specifically methylates position 2 of adenine 2503 in 23S rRNA and position 2 of adenine 37 in tRNAs. m2A2503 modification seems to play a crucial role in the proofreading step occurring at the peptidyl transferase center and thus would serve to optimize ribosomal fidelity. This Acinetobacter baumannii (strain AB307-0294) protein is Dual-specificity RNA methyltransferase RlmN.